The chain runs to 332 residues: L-lactate dehydrogenase A chain (332 aa).

NAD(+)-binding positions include 29 to 57 (GAVGMACAISILMKDLADELALVDVVEDK) and arginine 99. Residues arginine 106, asparagine 138, and arginine 169 each coordinate substrate. Position 138 (asparagine 138) interacts with NAD(+). The active-site Proton acceptor is histidine 193. Residue threonine 248 coordinates substrate.

It belongs to the LDH/MDH superfamily. LDH family. Homotetramer.

The protein resides in the cytoplasm. The enzyme catalyses (S)-lactate + NAD(+) = pyruvate + NADH + H(+). Its pathway is fermentation; pyruvate fermentation to lactate; (S)-lactate from pyruvate: step 1/1. In terms of biological role, interconverts simultaneously and stereospecifically pyruvate and lactate with concomitant interconversion of NADH and NAD(+). The protein is L-lactate dehydrogenase A chain (LDHA) of Columba livia (Rock dove).